The primary structure comprises 1045 residues: FERM, ARHGEF and pleckstrin domain-containing protein 1 (1045 aa).

Residues M1–G37 form a disordered region. 2 positions are modified to phosphoserine: S20 and S23. The residue at position 24 (T24) is a Phosphothreonine. The FERM domain occupies V40–E320. Phosphoserine is present on residues S340, S373, S389, S403, S418, S427, and S433. The interval S392–K534 is disordered. Composition is skewed to polar residues over residues T471–G489 and V496–P511. 2 positions are modified to phosphoserine: S510 and S514. Residues K540–T730 form the DH domain. The PH 1 domain occupies E759–D856. 3 positions are modified to phosphoserine: S833, S872, and S878. Positions P866–R902 are disordered. Position 883 is a phosphothreonine (T883). 3 positions are modified to phosphoserine: S889, S896, and S899. Residues E932–S1029 form the PH 2 domain.

In terms of assembly, interacts with CADM1. Interacts with RAC1.

Its subcellular location is the cell membrane. The protein resides in the synapse. The protein localises to the synaptosome. It localises to the cytoplasm. It is found in the cytosol. Its subcellular location is the cell projection. The protein resides in the filopodium. The protein localises to the dendrite. It localises to the dendritic spine. Its function is as follows. Functions as a guanine nucleotide exchange factor for RAC1. May play a role in semaphorin signaling. Plays a role in the assembly and disassembly of dendritic filopodia, the formation of dendritic spines, regulation of dendrite length and ultimately the formation of synapses. This is FERM, ARHGEF and pleckstrin domain-containing protein 1 (FARP1) from Pongo abelii (Sumatran orangutan).